A 101-amino-acid polypeptide reads, in one-letter code: Small ribosomal subunit protein uS14A (101 aa).

A disordered region spans residues 29–60 (EIIRSPRSTPEQRTAAQNELAHQPRDASAVRV). Polar residues predominate over residues 34 to 45 (PRSTPEQRTAAQ).

Belongs to the universal ribosomal protein uS14 family. Part of the 30S ribosomal subunit. Contacts proteins S3 and S10.

Functionally, binds 16S rRNA, required for the assembly of 30S particles and may also be responsible for determining the conformation of the 16S rRNA at the A site. In Mycolicibacterium paratuberculosis (strain ATCC BAA-968 / K-10) (Mycobacterium paratuberculosis), this protein is Small ribosomal subunit protein uS14A.